Consider the following 64-residue polypeptide: Ferredoxin-like protein in nif region (64 aa).

Residues 2 to 30 enclose the 4Fe-4S ferredoxin-type domain; sequence AFKIIASQCTQCGACEFECPSNAIELKGE. The [4Fe-4S] cluster site is built by C10, C13, C16, C20, C39, C42, C51, and C55.

The cofactor is [4Fe-4S] cluster.

The polypeptide is Ferredoxin-like protein in nif region (fdxN) (Sinorhizobium fredii (strain NBRC 101917 / NGR234)).